Reading from the N-terminus, the 570-residue chain is A-type ATP synthase subunit A (570 aa).

223 to 230 is an ATP binding site; the sequence is GPFGSGKT.

It belongs to the ATPase alpha/beta chains family. In terms of assembly, has multiple subunits with at least A(3), B(3), C, D, E, F, H, I and proteolipid K(x).

The protein resides in the cell membrane. It catalyses the reaction ATP + H2O + 4 H(+)(in) = ADP + phosphate + 5 H(+)(out). In terms of biological role, component of the A-type ATP synthase that produces ATP from ADP in the presence of a proton gradient across the membrane. The A chain is the catalytic subunit. This chain is A-type ATP synthase subunit A, found in Nanoarchaeum equitans (strain Kin4-M).